We begin with the raw amino-acid sequence, 175 residues long: MQSQTLLADTPLQSPYVEKQDFRDAMARLGSAVNIITTDGPAGRAGFTASAVCSVTDTPPTLLVCLNRSASVYSVFKQNQTLCVNTLAAEHESLSNLFGGKTPMELRFSAARWSTLATGSPILHGAVVSFDCQIGQIVSVGTHDIFFCQALALTRNDDSHGLAYFDRRYHSLLKQ.

It belongs to the non-flavoprotein flavin reductase family. RutF subfamily.

The catalysed reaction is FMNH2 + NAD(+) = FMN + NADH + 2 H(+). In terms of biological role, catalyzes the reduction of FMN to FMNH2 which is used to reduce pyrimidine by RutA via the Rut pathway. The sequence is that of FMN reductase (NADH) RutF from Serratia proteamaculans (strain 568).